Reading from the N-terminus, the 652-residue chain is Large subunit GTPase 1 homolog (652 aa).

Ser93 bears the Phosphoserine mark. In terms of domain architecture, CP-type G spans 164-438 (WRQLWRVIER…LCDCPGLVMP (275 aa)). 212-215 (NKAD) provides a ligand contact to GTP. Phosphoserine is present on Ser252. Positions 288–347 (LGEAASSEEDESEYEDCQEEEEDWQTCLEDSSSSDEEACGQDCKEGHTVDSEAQGRNTPQ) are disordered. Positions 293 to 311 (SSEEDESEYEDCQEEEEDW) are enriched in acidic residues. Residues 387-394 (GYPNVGKS) and 431-434 (DCPG) contribute to the GTP site. The segment at 625 to 652 (RGAGKPWKKHGNRNKKEKSRRLYKHLDM) is disordered. Positions 630-652 (PWKKHGNRNKKEKSRRLYKHLDM) are enriched in basic residues.

It belongs to the TRAFAC class YlqF/YawG GTPase family. LSG1 subfamily.

The protein localises to the cytoplasm. It localises to the endoplasmic reticulum. It is found in the nucleus. The protein resides in the cajal body. The enzyme catalyses GTP + H2O = GDP + phosphate + H(+). Functionally, functions as a GTPase. May act by mediating the release of NMD3 from the 60S ribosomal subunit after export into the cytoplasm during the 60S ribosomal subunit maturation. This chain is Large subunit GTPase 1 homolog, found in Bos taurus (Bovine).